Reading from the N-terminus, the 497-residue chain is Cobyric acid synthase (497 aa).

The GATase cobBQ-type domain maps to 250-445 (EVTIAVIRLP…LHGIFNNGPW (196 aa)). C331 serves as the catalytic Nucleophile. H437 is a catalytic residue.

The protein belongs to the CobB/CobQ family. CobQ subfamily.

The protein operates within cofactor biosynthesis; adenosylcobalamin biosynthesis. Its function is as follows. Catalyzes amidations at positions B, D, E, and G on adenosylcobyrinic A,C-diamide. NH(2) groups are provided by glutamine, and one molecule of ATP is hydrogenolyzed for each amidation. This Acaryochloris marina (strain MBIC 11017) protein is Cobyric acid synthase.